The chain runs to 535 residues: CTP synthase (535 aa).

Residues 1–267 are amidoligase domain; that stretch reads MTKYIFVTGG…DKLVCDHMKL (267 aa). Ser-13 contributes to the CTP binding site. Ser-13 contributes to the UTP binding site. 14–19 contributes to the ATP binding site; it reads SLGKGI. Tyr-54 is an L-glutamine binding site. Asp-71 serves as a coordination point for ATP. Residues Asp-71 and Glu-141 each coordinate Mg(2+). CTP is bound by residues 148-150, 188-193, and Lys-224; these read DIE and KTKPTQ. Residues 188 to 193 and Lys-224 contribute to the UTP site; that span reads KTKPTQ. Residues 292-534 enclose the Glutamine amidotransferase type-1 domain; sequence TISLVGKYVE…IGASVQAAEQ (243 aa). Gly-354 serves as a coordination point for L-glutamine. Cys-381 acts as the Nucleophile; for glutamine hydrolysis in catalysis. L-glutamine contacts are provided by residues 382 to 385, Glu-405, and Arg-462; that span reads LGMQ. Residues His-507 and Glu-509 contribute to the active site.

It belongs to the CTP synthase family. As to quaternary structure, homotetramer.

The enzyme catalyses UTP + L-glutamine + ATP + H2O = CTP + L-glutamate + ADP + phosphate + 2 H(+). It carries out the reaction L-glutamine + H2O = L-glutamate + NH4(+). The catalysed reaction is UTP + NH4(+) + ATP = CTP + ADP + phosphate + 2 H(+). It functions in the pathway pyrimidine metabolism; CTP biosynthesis via de novo pathway; CTP from UDP: step 2/2. With respect to regulation, allosterically activated by GTP, when glutamine is the substrate; GTP has no effect on the reaction when ammonia is the substrate. The allosteric effector GTP functions by stabilizing the protein conformation that binds the tetrahedral intermediate(s) formed during glutamine hydrolysis. Inhibited by the product CTP, via allosteric rather than competitive inhibition. Functionally, catalyzes the ATP-dependent amination of UTP to CTP with either L-glutamine or ammonia as the source of nitrogen. Regulates intracellular CTP levels through interactions with the four ribonucleotide triphosphates. This chain is CTP synthase, found in Bacillus velezensis (strain DSM 23117 / BGSC 10A6 / LMG 26770 / FZB42) (Bacillus amyloliquefaciens subsp. plantarum).